Consider the following 220-residue polypeptide: Deoxyribose-phosphate aldolase (220 aa).

Residue Asp-89 is the Proton donor/acceptor of the active site. Lys-151 functions as the Schiff-base intermediate with acetaldehyde in the catalytic mechanism. The Proton donor/acceptor role is filled by Lys-180.

It belongs to the DeoC/FbaB aldolase family. DeoC type 1 subfamily. Homotetramer, in solution and in the crystal structure.

It localises to the cytoplasm. It catalyses the reaction 2-deoxy-D-ribose 5-phosphate = D-glyceraldehyde 3-phosphate + acetaldehyde. The protein operates within carbohydrate degradation; 2-deoxy-D-ribose 1-phosphate degradation; D-glyceraldehyde 3-phosphate and acetaldehyde from 2-deoxy-alpha-D-ribose 1-phosphate: step 2/2. Its function is as follows. Catalyzes a reversible aldol reaction between acetaldehyde and D-glyceraldehyde 3-phosphate to generate 2-deoxy-D-ribose 5-phosphate. The protein is Deoxyribose-phosphate aldolase of Thermus thermophilus (strain ATCC 27634 / DSM 579 / HB8).